The primary structure comprises 92 residues: Large ribosomal subunit protein bL27 (92 aa).

Residues Met1–Phe9 constitute a propeptide that is removed on maturation. Residues Gly14–Ala34 form a disordered region.

This sequence belongs to the bacterial ribosomal protein bL27 family. Post-translationally, the N-terminus is cleaved by ribosomal processing cysteine protease Prp.

This Exiguobacterium sibiricum (strain DSM 17290 / CCUG 55495 / CIP 109462 / JCM 13490 / 255-15) protein is Large ribosomal subunit protein bL27.